The chain runs to 441 residues: Serine--tRNA ligase (441 aa).

An L-serine-binding site is contributed by 250–252; sequence TSE. ATP is bound by residues 281–283 and Val297; that span reads RRE. Glu304 lines the L-serine pocket. Residue 368–371 participates in ATP binding; that stretch reads EIVS. Residue Thr402 participates in L-serine binding.

This sequence belongs to the class-II aminoacyl-tRNA synthetase family. Type-1 seryl-tRNA synthetase subfamily. Homodimer. The tRNA molecule binds across the dimer.

The protein resides in the cytoplasm. It carries out the reaction tRNA(Ser) + L-serine + ATP = L-seryl-tRNA(Ser) + AMP + diphosphate + H(+). The catalysed reaction is tRNA(Sec) + L-serine + ATP = L-seryl-tRNA(Sec) + AMP + diphosphate + H(+). Its pathway is aminoacyl-tRNA biosynthesis; selenocysteinyl-tRNA(Sec) biosynthesis; L-seryl-tRNA(Sec) from L-serine and tRNA(Sec): step 1/1. Functionally, catalyzes the attachment of serine to tRNA(Ser). Is also able to aminoacylate tRNA(Sec) with serine, to form the misacylated tRNA L-seryl-tRNA(Sec), which will be further converted into selenocysteinyl-tRNA(Sec). This Thermoplasma volcanium (strain ATCC 51530 / DSM 4299 / JCM 9571 / NBRC 15438 / GSS1) protein is Serine--tRNA ligase.